A 340-amino-acid chain; its full sequence is Pre-rRNA-processing protein esf-2 (340 aa).

Composition is skewed to basic and acidic residues over residues 1 to 12 (MPEDDVRNKFLD) and 19 to 32 (DAGH…DFQK). The disordered stretch occupies residues 1-103 (MPEDDVRNKF…KSVLASDLPG (103 aa)). Acidic residues predominate over residues 44–64 (DDEDSEADDFTDAEEEHDQDD). Residues 65-95 (AESKDAPAKDGQETTDGKEKKDGKKEKEKKS) show a composition bias toward basic and acidic residues. One can recognise an RRM domain in the interval 124–214 (GVVYISRVPP…KKGSYYRDDI (91 aa)). A disordered region spans residues 272-329 (AKKASKGSKAGGEGAAQVTESTIPSAAATTTTTTNDDKRRTFKQIPLAKKRKLDETQP).

It belongs to the ESF2/ABP1 family.

It localises to the nucleus. The protein resides in the nucleolus. Functionally, involved in the small subunit (SSU) processome assembly and function, and in the 18S rRNA synthesis. Required for the early cleavages at sites A0, A1 and A2. In Neurospora crassa (strain ATCC 24698 / 74-OR23-1A / CBS 708.71 / DSM 1257 / FGSC 987), this protein is Pre-rRNA-processing protein esf-2 (esf-2).